A 295-amino-acid polypeptide reads, in one-letter code: Acetyl-coenzyme A carboxylase carboxyl transferase subunit beta (295 aa).

A disordered region spans residues 1–20 (MSWLSKLMPSGIRTENTPAK). Residues 28–295 (LWEKCSNCGS…QPHPQDADAA (268 aa)) form the CoA carboxyltransferase N-terminal domain. Positions 32, 35, 51, and 54 each coordinate Zn(2+). A C4-type zinc finger spans residues 32–54 (CSNCGSALYGPELEENLEVCPKC).

This sequence belongs to the AccD/PCCB family. In terms of assembly, acetyl-CoA carboxylase is a heterohexamer composed of biotin carboxyl carrier protein (AccB), biotin carboxylase (AccC) and two subunits each of ACCase subunit alpha (AccA) and ACCase subunit beta (AccD). It depends on Zn(2+) as a cofactor.

It localises to the cytoplasm. The enzyme catalyses N(6)-carboxybiotinyl-L-lysyl-[protein] + acetyl-CoA = N(6)-biotinyl-L-lysyl-[protein] + malonyl-CoA. Its pathway is lipid metabolism; malonyl-CoA biosynthesis; malonyl-CoA from acetyl-CoA: step 1/1. Functionally, component of the acetyl coenzyme A carboxylase (ACC) complex. Biotin carboxylase (BC) catalyzes the carboxylation of biotin on its carrier protein (BCCP) and then the CO(2) group is transferred by the transcarboxylase to acetyl-CoA to form malonyl-CoA. The polypeptide is Acetyl-coenzyme A carboxylase carboxyl transferase subunit beta (Xanthomonas axonopodis pv. citri (strain 306)).